Consider the following 70-residue polypeptide: MFTLKKSLLLLFFLGTINLSLCEQERDADEEERRDDDEMDVEVEKRFLPLAVSLAANFLPKLFCKITKKC.

The N-terminal stretch at 1–22 (MFTLKKSLLLLFFLGTINLSLC) is a signal peptide. Residues 23–46 (EQERDADEEERRDDDEMDVEVEKR) constitute a propeptide that is removed on maturation. Cysteine 64 and cysteine 70 are joined by a disulfide.

As to expression, expressed by the skin glands.

The protein resides in the secreted. Antimicrobial peptide with activity against Gram-positive and Gram-negative bacteria and against fungi. Has been tested against S.aureus (MIC=5.5 ug/mL), E.coli (MIC=6.5 ug/mL), B.dysenteriae (MIC=2.2 ug/mL), and C.albicans (MIC=7.5 ug/mL). Can regulate or mediate antimicrobial response by stimulating mast cell degranulation. Induces histamine release. Shows cytotoxicity toward solid tumor cell line HepG2. Also shows a potent hemolytic activity (LD(50)=5 ug/ml). The protein is Brevinin-ALb of Amolops loloensis (Lolokou Sucker Frog).